A 454-amino-acid polypeptide reads, in one-letter code: LETM1 domain-containing protein YLH47, mitochondrial (454 aa).

The N-terminal 45 residues, 1-45, are a transit peptide targeting the mitochondrion; it reads MLKYRSLPIKRAIHHPAPGITPISPRIMVSRLRVIPSFNLKFNRW. Residues 46-136 are Mitochondrial intermembrane-facing; that stretch reads NSSVPESSKK…LKRTTQDIVR (91 aa). Residues 51-73 form a disordered region; it reads ESSKKELKTTDGNQESASKVSPV. The chain crosses the membrane as a helical span at residues 137–157; that stretch reads LVPFAAFLIIPFAELLLPFAL. Over 158-454 the chain is Mitochondrial matrix; that stretch reads KLFPNLLPST…IGEAAAIKEK (297 aa). In terms of domain architecture, Letm1 RBD spans 177–371; it reads KLENLRNTRK…LCDVLIGIPD (195 aa). Positions 376–423 form a coiled coil; the sequence is EVKVNVVKEDEASAKQKLKQLREQEEIMKEEEQQEENAIVSVKDELSL. Basic and acidic residues-rich tracts occupy residues 420 to 430 and 437 to 454; these read ELSLDDQDKNI and VKPHDTKPIGEAAAIKEK. The disordered stretch occupies residues 420–454; it reads ELSLDDQDKNIDAAAPDVKPHDTKPIGEAAAIKEK.

In terms of assembly, associates with the mitochondrial ribosomes.

Its subcellular location is the mitochondrion inner membrane. Involved in mitochondrial potassium homeostasis through the mitochondrial K(+)/H(+) exchange regulation. The chain is LETM1 domain-containing protein YLH47, mitochondrial (YLH47) from Saccharomyces cerevisiae (strain ATCC 204508 / S288c) (Baker's yeast).